The chain runs to 554 residues: Calcium-dependent protein kinase 3 (554 aa).

The segment at 30–55 is disordered; the sequence is KKKSSNKSIKSQHKFEGSKIANKNNE. Positions 110–365 constitute a Protein kinase domain; it reads NLSEEPLGKG…ASEALKHPWF (256 aa). ATP is bound by residues 116–124 and Lys-139; that span reads LGKGTYGCV. The Proton acceptor role is filled by Asp-230. The short motif at 385 to 393 is the J domain autoinhibitory motif element; it reads NFKNYALLL. The j domain stretch occupies residues 385-420; sequence NFKNYALLLKLQKLAMTIIAQQSNDYDLQQLKTVFL. Positions 394-403 match the J domain EF-hand interaction motif motif; the sequence is KLQKLAMTII. EF-hand domains are found at residues 410-445, 448-479, 480-515, and 521-554; these read YDLQ…SGLK, QNFD…DRKH, LSKK…GNKK, and KDVN…KLKY. Ca(2+)-binding residues include Asp-458, Asp-460, Ser-462, Arg-464, Glu-469, Asp-493, Asp-495, Asp-497, Glu-499, Glu-504, Asp-534, Asn-536, Asp-538, Lys-540, and Glu-545.

Belongs to the protein kinase superfamily. Ser/Thr protein kinase family. CDPK subfamily. It depends on Mg(2+) as a cofactor.

Its subcellular location is the cytoplasm. The enzyme catalyses L-seryl-[protein] + ATP = O-phospho-L-seryl-[protein] + ADP + H(+). It carries out the reaction L-threonyl-[protein] + ATP = O-phospho-L-threonyl-[protein] + ADP + H(+). Activated by calcium. Upon calcium binding to the EF-hand domain 2, the C-terminus of the junction domain (J domain) undergoes a conformational change which results in the dissociation of the pseudo-substrate inhibitory motif from the catalytic domain. This, in turn, may facilitate the autophosphorylation of the activation loop at Thr-271, which leads to the kinase activation. In terms of biological role, calcium-dependent protein kinase which acts as a sensor and effector of intracellular Ca(2+) levels probably in part downstream of cGMP-activated PKG kinase. In the mosquito midgut, regulates the gliding motility of the ookinete which is essential for the ookinete to invade the midgut epithelium. However, another study showed that while required for ookinete invasion of the midgut epithelium, is not required for ookinete gliding motility. The sequence is that of Calcium-dependent protein kinase 3 from Plasmodium berghei (strain Anka).